The sequence spans 415 residues: MIDRKLLLQDFDKVALSLKKRNHAMDDELERLCEVIVHYKKQLIELEGLQAFQNKVSKEFGIKMAQKADTSDLKKELENNKIKLNELSKSVGELEQQIDLKLSIIPNLVDEKTPLGANEEDNIEIKKILTPRVFTFKPKEHFELAQQNGWIDFEGGVKLAKSRFSVIRGFGAKIYRALIHLMLDFNEKNGFEIIYTPALVNEKMLFGTGQLPKFKEDIFKIENENLYLIPTAEVTLTNLYNDTIISVENLPIKMTAHTPCFRSEAGSAGKDTRGMIRQHQFDKVELVAITHPKESDVMQEHMLESASEILKALELPHRFVQLCSADLGFSASNTIDIEVWLPGQNCYREISSVSNTRDFQARRAKIRFKENQKNQLAHTLNGSSLAVGRTMVALMENHQQADGSIHIPKALEKYL.

231–233 contributes to the L-serine binding site; the sequence is TAE. 262-264 is a binding site for ATP; it reads RSE. Residue E285 coordinates L-serine. 349-352 serves as a coordination point for ATP; the sequence is EISS. S383 contacts L-serine.

It belongs to the class-II aminoacyl-tRNA synthetase family. Type-1 seryl-tRNA synthetase subfamily. As to quaternary structure, homodimer. The tRNA molecule binds across the dimer.

The protein localises to the cytoplasm. The enzyme catalyses tRNA(Ser) + L-serine + ATP = L-seryl-tRNA(Ser) + AMP + diphosphate + H(+). It carries out the reaction tRNA(Sec) + L-serine + ATP = L-seryl-tRNA(Sec) + AMP + diphosphate + H(+). Its pathway is aminoacyl-tRNA biosynthesis; selenocysteinyl-tRNA(Sec) biosynthesis; L-seryl-tRNA(Sec) from L-serine and tRNA(Sec): step 1/1. Functionally, catalyzes the attachment of serine to tRNA(Ser). Is also able to aminoacylate tRNA(Sec) with serine, to form the misacylated tRNA L-seryl-tRNA(Sec), which will be further converted into selenocysteinyl-tRNA(Sec). In Helicobacter pylori (strain G27), this protein is Serine--tRNA ligase.